Consider the following 472-residue polypeptide: Deoxyribodipyrimidine photo-lyase (472 aa).

A Photolyase/cryptochrome alpha/beta domain is found at 2–134; the sequence is TTHLVWFRQD…VCEGFDDSVI (133 aa). The (6R)-5,10-methylene-5,6,7,8-tetrahydrofolate site is built by asparagine 109 and glutamate 110. Residue tyrosine 223 coordinates FAD. A DNA-binding site is contributed by arginine 227. FAD contacts are provided by residues 235 to 239, tryptophan 272, and 275 to 282; these read TSRLS and ELIWREFY. Interaction with DNA regions lie at residues 275-282 and 342-343; these read ELIWREFY and NR. 373-375 lines the FAD pocket; that stretch reads DGD. Glutamine 405 contacts DNA.

The protein belongs to the DNA photolyase class-1 family. In terms of assembly, monomer. Requires FAD as cofactor. (6R)-5,10-methylene-5,6,7,8-tetrahydrofolate is required as a cofactor.

The catalysed reaction is cyclobutadipyrimidine (in DNA) = 2 pyrimidine residues (in DNA).. Involved in repair of UV radiation-induced DNA damage. Catalyzes the light-dependent monomerization (300-600 nm) of cyclobutyl pyrimidine dimers (in cis-syn configuration), which are formed between adjacent bases on the same DNA strand upon exposure to ultraviolet radiation. This is Deoxyribodipyrimidine photo-lyase (phrB) from Escherichia coli (strain K12).